Here is a 167-residue protein sequence, read N- to C-terminus: Phosphopantetheine adenylyltransferase (167 aa).

S9 is a binding site for substrate. ATP is bound by residues 9–10 (SF) and H17. 3 residues coordinate substrate: K41, L73, and K87. ATP is bound by residues 88-90 (GLR), E98, and 123-129 (YSYLSSS).

It belongs to the bacterial CoaD family. In terms of assembly, homohexamer. It depends on Mg(2+) as a cofactor.

The protein resides in the cytoplasm. The catalysed reaction is (R)-4'-phosphopantetheine + ATP + H(+) = 3'-dephospho-CoA + diphosphate. Its pathway is cofactor biosynthesis; coenzyme A biosynthesis; CoA from (R)-pantothenate: step 4/5. Functionally, reversibly transfers an adenylyl group from ATP to 4'-phosphopantetheine, yielding dephospho-CoA (dPCoA) and pyrophosphate. In Caldicellulosiruptor bescii (strain ATCC BAA-1888 / DSM 6725 / KCTC 15123 / Z-1320) (Anaerocellum thermophilum), this protein is Phosphopantetheine adenylyltransferase.